The chain runs to 564 residues: Ell-associated factor Eaf (564 aa).

Disordered stretches follow at residues 179 to 255 (SGPG…MITD) and 270 to 564 (QANI…DDDD). Residues 186–205 (ENSTMRVSSKTKVSTGSRRN) show a composition bias toward polar residues. Residue serine 215 is modified to Phosphoserine. The segment covering 274-283 (SGSSTGSSSG) has biased composition (low complexity). Basic residues predominate over residues 297–309 (GKQRQAHGKRQQI). Composition is skewed to low complexity over residues 315-329 (PPVQ…QQQP), 343-387 (QQQQ…QQRP), and 409-420 (ASQSVAQAAAVL). Over residues 438 to 453 (DSSDSDSGSDSDDSTE) the composition is skewed to acidic residues. 3 stretches are compositionally biased toward low complexity: residues 463–505 (EQQQ…NQLP), 523–533 (QQPQPQPQQQQ), and 546–564 (NDLL…DDDD).

It belongs to the EAF family.

The protein resides in the nucleus. Its function is as follows. Promotes transcriptional elongation by Su(Tpl)/ELL. Essential for development. The sequence is that of Ell-associated factor Eaf from Drosophila pseudoobscura pseudoobscura (Fruit fly).